Here is a 584-residue protein sequence, read N- to C-terminus: 2-isopropylmalate synthase (584 aa).

One can recognise a Pyruvate carboxyltransferase domain in the interval 45-323 (PRWLSTDLRD…SPNLDFSKLD (279 aa)). A divalent metal cation is bound by residues Asp54, His262, His264, and Asn298.

Belongs to the alpha-IPM synthase/homocitrate synthase family. LeuA type 2 subfamily. In terms of assembly, homodimer. The cofactor is a divalent metal cation.

The catalysed reaction is 3-methyl-2-oxobutanoate + acetyl-CoA + H2O = (2S)-2-isopropylmalate + CoA + H(+). It participates in amino-acid biosynthesis; L-leucine biosynthesis; L-leucine from 3-methyl-2-oxobutanoate: step 1/4. Functionally, catalyzes the condensation of the acetyl group of acetyl-CoA with 3-methyl-2-oxobutanoate (2-oxoisovalerate) to form 3-carboxy-3-hydroxy-4-methylpentanoate (2-isopropylmalate). This is 2-isopropylmalate synthase (leu3) from Schizosaccharomyces pombe (strain 972 / ATCC 24843) (Fission yeast).